A 591-amino-acid chain; its full sequence is Aspartate--tRNA ligase (591 aa).

L-aspartate is bound at residue Glu174. An aspartate region spans residues 198 to 201; it reads QLFK. Arg220 provides a ligand contact to L-aspartate. ATP-binding positions include 220–222 and Gln229; that span reads RDE. His450 contributes to the L-aspartate binding site. Residue Glu486 coordinates ATP. Arg493 contacts L-aspartate. Residue 538–541 participates in ATP binding; the sequence is GLDR.

The protein belongs to the class-II aminoacyl-tRNA synthetase family. Type 1 subfamily. As to quaternary structure, homodimer.

It is found in the cytoplasm. The catalysed reaction is tRNA(Asp) + L-aspartate + ATP = L-aspartyl-tRNA(Asp) + AMP + diphosphate. Its function is as follows. Catalyzes the attachment of L-aspartate to tRNA(Asp) in a two-step reaction: L-aspartate is first activated by ATP to form Asp-AMP and then transferred to the acceptor end of tRNA(Asp). This is Aspartate--tRNA ligase from Leuconostoc mesenteroides subsp. mesenteroides (strain ATCC 8293 / DSM 20343 / BCRC 11652 / CCM 1803 / JCM 6124 / NCDO 523 / NBRC 100496 / NCIMB 8023 / NCTC 12954 / NRRL B-1118 / 37Y).